A 651-amino-acid chain; its full sequence is Acetyl-coenzyme A synthetase 1 (651 aa).

CoA-binding positions include 191–194 (RGGK), Thr-311, and Asn-335. ATP contacts are provided by residues 387–389 (GEP), 411–416 (DTWWQT), Asp-500, and Arg-515. Ser-523 is a CoA binding site. Arg-526 contacts ATP. Residues Val-537, His-539, and Val-542 each contribute to the Mg(2+) site. Residue Arg-584 coordinates CoA. Lys-609 carries the post-translational modification N6-acetyllysine.

Belongs to the ATP-dependent AMP-binding enzyme family. Mg(2+) serves as cofactor. Post-translationally, acetylated. Deacetylation by the SIR2-homolog deacetylase activates the enzyme.

It carries out the reaction acetate + ATP + CoA = acetyl-CoA + AMP + diphosphate. Catalyzes the conversion of acetate into acetyl-CoA (AcCoA), an essential intermediate at the junction of anabolic and catabolic pathways. AcsA undergoes a two-step reaction. In the first half reaction, AcsA combines acetate with ATP to form acetyl-adenylate (AcAMP) intermediate. In the second half reaction, it can then transfer the acetyl group from AcAMP to the sulfhydryl group of CoA, forming the product AcCoA. This is Acetyl-coenzyme A synthetase 1 from Pseudomonas aeruginosa (strain ATCC 15692 / DSM 22644 / CIP 104116 / JCM 14847 / LMG 12228 / 1C / PRS 101 / PAO1).